We begin with the raw amino-acid sequence, 310 residues long: Methionyl-tRNA formyltransferase (310 aa).

(6S)-5,6,7,8-tetrahydrofolate is bound at residue 109–112 (SLLP).

The protein belongs to the Fmt family.

The catalysed reaction is L-methionyl-tRNA(fMet) + (6R)-10-formyltetrahydrofolate = N-formyl-L-methionyl-tRNA(fMet) + (6S)-5,6,7,8-tetrahydrofolate + H(+). Attaches a formyl group to the free amino group of methionyl-tRNA(fMet). The formyl group appears to play a dual role in the initiator identity of N-formylmethionyl-tRNA by promoting its recognition by IF2 and preventing the misappropriation of this tRNA by the elongation apparatus. The sequence is that of Methionyl-tRNA formyltransferase from Pseudomonas putida (strain W619).